The primary structure comprises 508 residues: Lysine--tRNA ligase (508 aa).

Mg(2+)-binding residues include Glu418 and Glu425.

The protein belongs to the class-II aminoacyl-tRNA synthetase family. Homodimer. The cofactor is Mg(2+).

The protein localises to the cytoplasm. It catalyses the reaction tRNA(Lys) + L-lysine + ATP = L-lysyl-tRNA(Lys) + AMP + diphosphate. The protein is Lysine--tRNA ligase of Burkholderia ambifaria (strain MC40-6).